Consider the following 328-residue polypeptide: 3-dehydroquinate synthase (328 aa).

The protein belongs to the archaeal-type DHQ synthase family.

The catalysed reaction is 2-amino-2,3,7-trideoxy-D-lyxo-hept-6-ulosonate + NAD(+) + H2O = 3-dehydroquinate + NH4(+) + NADH + H(+). Its function is as follows. Catalyzes the oxidative deamination and cyclization of 2-amino-3,7-dideoxy-D-threo-hept-6-ulosonic acid (ADH) to yield 3-dehydroquinate (DHQ), which is fed into the canonical shikimic pathway of aromatic amino acid biosynthesis. The protein is 3-dehydroquinate synthase of Methanospirillum hungatei JF-1 (strain ATCC 27890 / DSM 864 / NBRC 100397 / JF-1).